The primary structure comprises 342 residues: Phosphate acyltransferase (342 aa).

Belongs to the PlsX family. In terms of assembly, homodimer. Probably interacts with PlsY.

It localises to the cytoplasm. The catalysed reaction is a fatty acyl-[ACP] + phosphate = an acyl phosphate + holo-[ACP]. The protein operates within lipid metabolism; phospholipid metabolism. In terms of biological role, catalyzes the reversible formation of acyl-phosphate (acyl-PO(4)) from acyl-[acyl-carrier-protein] (acyl-ACP). This enzyme utilizes acyl-ACP as fatty acyl donor, but not acyl-CoA. This chain is Phosphate acyltransferase, found in Shewanella putrefaciens (strain CN-32 / ATCC BAA-453).